The sequence spans 721 residues: Polyribonucleotide nucleotidyltransferase (721 aa).

2 residues coordinate Mg(2+): Asp-495 and Asp-501. The 60-residue stretch at 562 to 621 (PRLLSFRIDPELIGTVIGPGGRTIKGITERTNTKIDIEDGGIVTIASHDGAAAEEAQKII) folds into the KH domain. The S1 motif domain maps to 631–699 (GEIFPGVVTR…SRGRINLTLR (69 aa)). Positions 702–721 (GQNGGMSYPEPTPTPVAPLS) are disordered. Residues 711 to 721 (EPTPTPVAPLS) are compositionally biased toward pro residues.

The protein belongs to the polyribonucleotide nucleotidyltransferase family. Mg(2+) is required as a cofactor.

It localises to the cytoplasm. The catalysed reaction is RNA(n+1) + phosphate = RNA(n) + a ribonucleoside 5'-diphosphate. Involved in mRNA degradation. Catalyzes the phosphorolysis of single-stranded polyribonucleotides processively in the 3'- to 5'-direction. This is Polyribonucleotide nucleotidyltransferase from Prochlorococcus marinus (strain MIT 9301).